A 58-amino-acid chain; its full sequence is Putative antitoxin VapB16 (58 aa).

Its function is as follows. Putative antitoxin component of a possible type II toxin-antitoxin (TA) system. The cognate toxin is VapC16. The protein is Putative antitoxin VapB16 (vapB16) of Mycobacterium tuberculosis (strain ATCC 25618 / H37Rv).